The chain runs to 185 residues: Large ribosomal subunit protein uL5m (185 aa).

It belongs to the universal ribosomal protein uL5 family. As to quaternary structure, component of the mitochondrial ribosome large subunit.

The protein localises to the mitochondrion. The chain is Large ribosomal subunit protein uL5m (RPL5) from Arabidopsis thaliana (Mouse-ear cress).